Here is a 578-residue protein sequence, read N- to C-terminus: Signal peptide peptidase-like 2B (578 aa).

Positions 1 to 19 (MAAARLAAALLLLAAQVAC) are cleaved as a signal peptide. The Lumenal portion of the chain corresponds to 20-168 (EFGVLRVVSQ…APSEPVMDYN (149 aa)). Positions 61 to 145 (LRDLSTTQLC…LLSHRDLQDI (85 aa)) constitute a PA domain. Asparagine 91 and asparagine 123 each carry an N-linked (GlcNAc...) asparagine glycan. A helical transmembrane segment spans residues 169-189 (MVIIFVMAVGTVAIGGYWAGS). Over 190 to 216 (HDVKKYMKHKRDDGPEKQEDEAVDVTP) the chain is Cytoplasmic. Residues 217–237 (VMICVFVVMCCFMLVLLYYFY) form a helical membrane-spanning segment. Residues 238–239 (DR) are Lumenal-facing. A helical transmembrane segment spans residues 240–260 (LVYVIIGIFCLASSTGLYSCL). Over 261–286 (APFVRKLPFCTCRVPDNNLPYFHKRP) the chain is Cytoplasmic. Residues 287 to 307 (QARMLLLALFCVTVSVVWGIF) form a helical membrane-spanning segment. Topologically, residues 308-312 (RNEDQ) are lumenal. Residues 313-333 (WAWVLQDTLGIAFCLYMLKTI) traverse the membrane as a helical segment. The Cytoplasmic segment spans residues 334–341 (RLPTFKAC). Residues 342–362 (TLLLLVLFIYDIFFVFITPFL) traverse the membrane as a helical segment. Aspartate 352 is an active-site residue. Residues 363 to 405 (TKSGNSIMVEVATGPSNSSTHEKLPMVLKVPRLNTSPLSLCDR) lie on the Lumenal side of the membrane. A helical membrane pass occupies residues 406 to 426 (PFSLLGFGDILVPGLLVAYCH). Aspartate 414 is a catalytic residue. The Cytoplasmic portion of the chain corresponds to 427–438 (RFDIQVQSSRIY). Residues 439–459 (FVACTIAYGLGLLVTFVALVL) traverse the membrane as a helical segment. At 460–463 (MQRG) the chain is on the lumenal side. The chain crosses the membrane as a helical span at residues 464–484 (QPALLYLVPCTLLTSCTVALW). The short motif at 465 to 467 (PAL) is the PAL element. The Cytoplasmic portion of the chain corresponds to 485 to 578 (RRELGAFWTG…IPVVKPETSA (94 aa)). Residues 502–578 (PQTPWAATQG…IPVVKPETSA (77 aa)) are disordered. Over residues 520-529 (SSLSEQPPSE) the composition is skewed to low complexity.

This sequence belongs to the peptidase A22B family. Monomer. Homodimer. Interacts with ITM2B and TNF. In terms of processing, glycosylated.

It is found in the cell membrane. The protein localises to the golgi apparatus membrane. It localises to the lysosome membrane. The protein resides in the endosome membrane. Its subcellular location is the membrane. Its function is as follows. Intramembrane-cleaving aspartic protease (I-CLiP) that cleaves type II membrane signal peptides in the hydrophobic plane of the membrane. Functions in ITM2B and TNF processing. Catalyzes the intramembrane cleavage of the anchored fragment of shed TNF-alpha (TNF), which promotes the release of the intracellular domain (ICD) for signaling to the nucleus. May play a role in the regulation of innate and adaptive immunity. The protein is Signal peptide peptidase-like 2B of Mus musculus (Mouse).